A 343-amino-acid chain; its full sequence is DNA-directed RNA polymerase subunit alpha (343 aa).

The alpha N-terminal domain (alpha-NTD) stretch occupies residues 1–239 (MGETVTIQKN…DQLNVFVNFE (239 aa)). Residues 255 to 343 (FNPAFLKKVD…ELAKRFEDHY (89 aa)) are alpha C-terminal domain (alpha-CTD).

It belongs to the RNA polymerase alpha chain family. In terms of assembly, homodimer. The RNAP catalytic core consists of 2 alpha, 1 beta, 1 beta' and 1 omega subunit. When a sigma factor is associated with the core the holoenzyme is formed, which can initiate transcription.

It catalyses the reaction RNA(n) + a ribonucleoside 5'-triphosphate = RNA(n+1) + diphosphate. DNA-dependent RNA polymerase catalyzes the transcription of DNA into RNA using the four ribonucleoside triphosphates as substrates. In Bradyrhizobium diazoefficiens (strain JCM 10833 / BCRC 13528 / IAM 13628 / NBRC 14792 / USDA 110), this protein is DNA-directed RNA polymerase subunit alpha.